Here is a 200-residue protein sequence, read N- to C-terminus: Large ribosomal subunit protein uL4 (200 aa).

A disordered region spans residues 43–70; sequence RAQKTRAEVSGSGKKPWRQKGTGRARSG.

The protein belongs to the universal ribosomal protein uL4 family. Part of the 50S ribosomal subunit.

In terms of biological role, one of the primary rRNA binding proteins, this protein initially binds near the 5'-end of the 23S rRNA. It is important during the early stages of 50S assembly. It makes multiple contacts with different domains of the 23S rRNA in the assembled 50S subunit and ribosome. Forms part of the polypeptide exit tunnel. The polypeptide is Large ribosomal subunit protein uL4 (Glaesserella parasuis serovar 5 (strain SH0165) (Haemophilus parasuis)).